Here is a 186-residue protein sequence, read N- to C-terminus: Ribosome-recycling factor (186 aa).

It belongs to the RRF family.

The protein localises to the cytoplasm. Its function is as follows. Responsible for the release of ribosomes from messenger RNA at the termination of protein biosynthesis. May increase the efficiency of translation by recycling ribosomes from one round of translation to another. The polypeptide is Ribosome-recycling factor (Rickettsia rickettsii (strain Iowa)).